Reading from the N-terminus, the 954-residue chain is Glycine dehydrogenase (decarboxylating) (954 aa).

K704 bears the N6-(pyridoxal phosphate)lysine mark.

This sequence belongs to the GcvP family. As to quaternary structure, the glycine cleavage system is composed of four proteins: P, T, L and H. The cofactor is pyridoxal 5'-phosphate.

The catalysed reaction is N(6)-[(R)-lipoyl]-L-lysyl-[glycine-cleavage complex H protein] + glycine + H(+) = N(6)-[(R)-S(8)-aminomethyldihydrolipoyl]-L-lysyl-[glycine-cleavage complex H protein] + CO2. Functionally, the glycine cleavage system catalyzes the degradation of glycine. The P protein binds the alpha-amino group of glycine through its pyridoxal phosphate cofactor; CO(2) is released and the remaining methylamine moiety is then transferred to the lipoamide cofactor of the H protein. This Agrobacterium fabrum (strain C58 / ATCC 33970) (Agrobacterium tumefaciens (strain C58)) protein is Glycine dehydrogenase (decarboxylating).